We begin with the raw amino-acid sequence, 140 residues long: Large ribosomal subunit protein uL16 (140 aa).

Residues 1-14 (MLMPKKVKHRKQMK) show a composition bias toward basic residues. Positions 1–20 (MLMPKKVKHRKQMKGRMSGT) are disordered.

This sequence belongs to the universal ribosomal protein uL16 family. As to quaternary structure, part of the 50S ribosomal subunit.

Functionally, binds 23S rRNA and is also seen to make contacts with the A and possibly P site tRNAs. This is Large ribosomal subunit protein uL16 from Geotalea daltonii (strain DSM 22248 / JCM 15807 / FRC-32) (Geobacter daltonii).